The sequence spans 345 residues: MFIAVEVSPVMEDITRQSKKTSVENETGDDQSATSVVLKAKRKRRSQPRDAPPQRSSVHRGVTRHRWTGRYEAHLWDKNSWNETQTKKGRQVYLGAYDEEDAAARAYDLAALKYWGRDTILNFPLCNYEEDIKEMESQSKEEYIGSLRRKSSGFSRGVSKYRGVAKHHHNGRWEARIGRVFGNKYLYLGTYATQEEAAIAYDIAAIEYRGLNAVTNFDISRYLKLPVPENPIDTANNLLESPHSDLSPFIKPNHESDLSQSQSSSEDNDDRKTKLLKSSPLVAEEVIGPSTPPEIAPPRRSFPEDIQTYFGCQNSGKLTAEEDDVIFGDLDSFLTPDFYSELNDC.

A disordered region spans residues 15–62 (TRQSKKTSVENETGDDQSATSVVLKAKRKRRSQPRDAPPQRSSVHRGV). DNA-binding regions (AP2/ERF) lie at residues 58–124 (VHRG…LNFP) and 160–218 (KYRG…TNFD). The interval 243-302 (HSDLSPFIKPNHESDLSQSQSSSEDNDDRKTKLLKSSPLVAEEVIGPSTPPEIAPPRRSF) is disordered.

This sequence belongs to the AP2/ERF transcription factor family. AP2 subfamily.

It is found in the nucleus. Its function is as follows. Probably acts as a transcriptional activator. Binds to the GCC-box pathogenesis-related promoter element. May be involved in the regulation of gene expression by stress factors and by components of stress signal transduction pathways. The polypeptide is AP2-like ethylene-responsive transcription factor At1g16060 (Arabidopsis thaliana (Mouse-ear cress)).